A 261-amino-acid chain; its full sequence is Cytochrome c oxidase subunit 3 (261 aa).

The Mitochondrial matrix portion of the chain corresponds to 1–15 (MTRQTHAYHMVNPSP). Residues 16 to 34 (WPLTGALSALLMTSGLIMW) form a helical membrane-spanning segment. The Mitochondrial intermembrane segment spans residues 35 to 40 (FHFNST). Residues 41-66 (ILLMLGLTTNMLTMYQWWRDVIREST) traverse the membrane as a helical segment. The Mitochondrial matrix segment spans residues 67-72 (FQGHHT). Residues 73 to 105 (PNVQKGLRYGMILFIISEVLFFTGFFWAFYHSS) traverse the membrane as a helical segment. Over 106–128 (LAPTPELGGCWPPTGIHPLNPLE) the chain is Mitochondrial intermembrane. The helical transmembrane segment at 129–152 (VPLLNTSVLLASGVSITWAHHSLM) threads the bilayer. Over 153–155 (EGN) the chain is Mitochondrial matrix. The helical transmembrane segment at 156 to 183 (RNHMLQALFITIALGVYFTLLQASEYYE) threads the bilayer. Topologically, residues 184-190 (APFTISD) are mitochondrial intermembrane. Residues 191 to 223 (GVYGSTFFVATGFHGLHVIIGSTFLIVCFFRQL) traverse the membrane as a helical segment. The Mitochondrial matrix portion of the chain corresponds to 224 to 232 (KFHFTSNHH). Residues 233 to 256 (FGFEAAAWYWHFVDVVWLFLYVSI) form a helical membrane-spanning segment. The Mitochondrial intermembrane portion of the chain corresponds to 257–261 (YWWGS).

It belongs to the cytochrome c oxidase subunit 3 family. As to quaternary structure, component of the cytochrome c oxidase (complex IV, CIV), a multisubunit enzyme composed of 14 subunits. The complex is composed of a catalytic core of 3 subunits MT-CO1, MT-CO2 and MT-CO3, encoded in the mitochondrial DNA, and 11 supernumerary subunits COX4I, COX5A, COX5B, COX6A, COX6B, COX6C, COX7A, COX7B, COX7C, COX8 and NDUFA4, which are encoded in the nuclear genome. The complex exists as a monomer or a dimer and forms supercomplexes (SCs) in the inner mitochondrial membrane with NADH-ubiquinone oxidoreductase (complex I, CI) and ubiquinol-cytochrome c oxidoreductase (cytochrome b-c1 complex, complex III, CIII), resulting in different assemblies (supercomplex SCI(1)III(2)IV(1) and megacomplex MCI(2)III(2)IV(2)).

It localises to the mitochondrion inner membrane. It catalyses the reaction 4 Fe(II)-[cytochrome c] + O2 + 8 H(+)(in) = 4 Fe(III)-[cytochrome c] + 2 H2O + 4 H(+)(out). Its function is as follows. Component of the cytochrome c oxidase, the last enzyme in the mitochondrial electron transport chain which drives oxidative phosphorylation. The respiratory chain contains 3 multisubunit complexes succinate dehydrogenase (complex II, CII), ubiquinol-cytochrome c oxidoreductase (cytochrome b-c1 complex, complex III, CIII) and cytochrome c oxidase (complex IV, CIV), that cooperate to transfer electrons derived from NADH and succinate to molecular oxygen, creating an electrochemical gradient over the inner membrane that drives transmembrane transport and the ATP synthase. Cytochrome c oxidase is the component of the respiratory chain that catalyzes the reduction of oxygen to water. Electrons originating from reduced cytochrome c in the intermembrane space (IMS) are transferred via the dinuclear copper A center (CU(A)) of subunit 2 and heme A of subunit 1 to the active site in subunit 1, a binuclear center (BNC) formed by heme A3 and copper B (CU(B)). The BNC reduces molecular oxygen to 2 water molecules using 4 electrons from cytochrome c in the IMS and 4 protons from the mitochondrial matrix. This Eudorcas rufifrons (Red-fronted gazelle) protein is Cytochrome c oxidase subunit 3 (MT-CO3).